The primary structure comprises 359 residues: 3-dehydroquinate synthase (359 aa).

Residues 71 to 76 (DGEQYK), 105 to 109 (GVIGD), 129 to 130 (TT), K142, K151, and 169 to 172 (CLST) each bind NAD(+). Positions 184, 247, and 264 each coordinate Zn(2+).

This sequence belongs to the sugar phosphate cyclases superfamily. Dehydroquinate synthase family. Co(2+) is required as a cofactor. It depends on Zn(2+) as a cofactor. Requires NAD(+) as cofactor.

It is found in the cytoplasm. The catalysed reaction is 7-phospho-2-dehydro-3-deoxy-D-arabino-heptonate = 3-dehydroquinate + phosphate. Its pathway is metabolic intermediate biosynthesis; chorismate biosynthesis; chorismate from D-erythrose 4-phosphate and phosphoenolpyruvate: step 2/7. In terms of biological role, catalyzes the conversion of 3-deoxy-D-arabino-heptulosonate 7-phosphate (DAHP) to dehydroquinate (DHQ). The chain is 3-dehydroquinate synthase from Shewanella piezotolerans (strain WP3 / JCM 13877).